Here is a 439-residue protein sequence, read N- to C-terminus: Xylose isomerase (439 aa).

Catalysis depends on residues His-99 and Asp-102. Mg(2+) contacts are provided by Glu-230, Glu-266, His-269, Asp-294, Asp-305, Asp-307, and Asp-337.

It belongs to the xylose isomerase family. In terms of assembly, homotetramer. The cofactor is Mg(2+).

It localises to the cytoplasm. It catalyses the reaction alpha-D-xylose = alpha-D-xylulofuranose. This is Xylose isomerase from Oceanobacillus iheyensis (strain DSM 14371 / CIP 107618 / JCM 11309 / KCTC 3954 / HTE831).